The following is a 360-amino-acid chain: MLYFLSELTAQVSALNVFRYLTFRTGGAVMTAMLVAFVFGPGIIEWLKRKQGEGQPIRSDGPESHLTKKGTPTMGGIMILLGVGVATLLWADLSKGYVWAVLLLTLGYGAIGFADDYLKLTKRNTKGLSGRLKLVAQVGMAVIAGLWIMLLGQGDQASSLALPFFKDLTFNLGWFYLPFAAFVMVGASNAVNLTDGLDGLAIVPVMIAAGVFMLIAYLVGNIIFSNYLQIQHVPGTGELAVFCGAIVGAAVGFLWFNAPPAMVFMGDTGSLALGGALGAVSVVTKHEIVLAIVGGLFVLETVSVIVQVASFKLTGKRVFRMAPLHHHFEKKGWAEPTVVIRFWIIAMILAIVGLSTLKLR.

10 helical membrane-spanning segments follow: residues 27 to 47, 73 to 93, 98 to 118, 134 to 154, 168 to 188, 199 to 219, 239 to 259, 263 to 283, 288 to 308, and 337 to 357; these read GAVM…IEWL, TMGG…WADL, VWAV…DDYL, LVAQ…LGQG, LTFN…VGAS, GLAI…AYLV, LAVF…FNAP, VFMG…VSVV, IVLA…IVQV, and TVVI…LSTL.

This sequence belongs to the glycosyltransferase 4 family. MraY subfamily. Requires Mg(2+) as cofactor.

Its subcellular location is the cell inner membrane. It carries out the reaction UDP-N-acetyl-alpha-D-muramoyl-L-alanyl-gamma-D-glutamyl-meso-2,6-diaminopimeloyl-D-alanyl-D-alanine + di-trans,octa-cis-undecaprenyl phosphate = di-trans,octa-cis-undecaprenyl diphospho-N-acetyl-alpha-D-muramoyl-L-alanyl-D-glutamyl-meso-2,6-diaminopimeloyl-D-alanyl-D-alanine + UMP. It participates in cell wall biogenesis; peptidoglycan biosynthesis. Functionally, catalyzes the initial step of the lipid cycle reactions in the biosynthesis of the cell wall peptidoglycan: transfers peptidoglycan precursor phospho-MurNAc-pentapeptide from UDP-MurNAc-pentapeptide onto the lipid carrier undecaprenyl phosphate, yielding undecaprenyl-pyrophosphoryl-MurNAc-pentapeptide, known as lipid I. This is Phospho-N-acetylmuramoyl-pentapeptide-transferase from Rhodospirillum rubrum (strain ATCC 11170 / ATH 1.1.1 / DSM 467 / LMG 4362 / NCIMB 8255 / S1).